The chain runs to 338 residues: Lipoate-protein ligase A (338 aa).

The 188-residue stretch at 29-216 (PATQRVLFLW…AFFAHYGERI (188 aa)) folds into the BPL/LPL catalytic domain. ATP is bound by residues arginine 71, 76–79 (GAVF), and lysine 134. Lysine 134 contributes to the (R)-lipoate binding site.

It belongs to the LplA family. In terms of assembly, monomer.

It is found in the cytoplasm. It catalyses the reaction L-lysyl-[lipoyl-carrier protein] + (R)-lipoate + ATP = N(6)-[(R)-lipoyl]-L-lysyl-[lipoyl-carrier protein] + AMP + diphosphate + H(+). It participates in protein modification; protein lipoylation via exogenous pathway; protein N(6)-(lipoyl)lysine from lipoate: step 1/2. Its pathway is protein modification; protein lipoylation via exogenous pathway; protein N(6)-(lipoyl)lysine from lipoate: step 2/2. In terms of biological role, catalyzes both the ATP-dependent activation of exogenously supplied lipoate to lipoyl-AMP and the transfer of the activated lipoyl onto the lipoyl domains of lipoate-dependent enzymes. This is Lipoate-protein ligase A from Salmonella typhi.